Consider the following 416-residue polypeptide: Beta sliding clamp (416 aa).

It belongs to the beta sliding clamp family. In terms of assembly, forms a ring-shaped head-to-tail homodimer around DNA which binds and tethers DNA polymerases and other proteins to the DNA. The DNA replisome complex has a single clamp-loading complex (3 tau and 1 each of delta, delta', psi and chi subunits) which binds 3 Pol III cores (1 core on the leading strand and 2 on the lagging strand) each with a beta sliding clamp dimer. Additional proteins in the replisome are other copies of gamma, psi and chi, Ssb, DNA helicase and RNA primase.

The protein localises to the cytoplasm. Confers DNA tethering and processivity to DNA polymerases and other proteins. Acts as a clamp, forming a ring around DNA (a reaction catalyzed by the clamp-loading complex) which diffuses in an ATP-independent manner freely and bidirectionally along dsDNA. Initially characterized for its ability to contact the catalytic subunit of DNA polymerase III (Pol III), a complex, multichain enzyme responsible for most of the replicative synthesis in bacteria; Pol III exhibits 3'-5' exonuclease proofreading activity. The beta chain is required for initiation of replication as well as for processivity of DNA replication. This chain is Beta sliding clamp (dnaN), found in Chlamydia trachomatis serovar D (strain ATCC VR-885 / DSM 19411 / UW-3/Cx).